We begin with the raw amino-acid sequence, 248 residues long: Probable cyclic nucleotide phosphodiesterase CBUA0032 (248 aa).

Positions 13, 15, 52, 82, 152, 191, and 193 each coordinate Fe cation. AMP-binding positions include His15, Asp52, and 82–83; that span reads NH. His193 is an AMP binding site.

This sequence belongs to the cyclic nucleotide phosphodiesterase class-III family. Fe(2+) is required as a cofactor.

The polypeptide is Probable cyclic nucleotide phosphodiesterase CBUA0032 (Coxiella burnetii (strain RSA 493 / Nine Mile phase I)).